Reading from the N-terminus, the 24-residue chain is Potassium channel toxin alpha-KTx 6 OcyKTx5 (24 aa).

A disulfide bond links Cys3 and Cys24.

Belongs to the short scorpion toxin superfamily. Potassium channel inhibitor family. Alpha-KTx 06 subfamily. As to expression, expressed by the venom gland.

It localises to the secreted. Its function is as follows. Blocks voltage-gated potassium channels. This Opisthacanthus cayaporum (South American scorpion) protein is Potassium channel toxin alpha-KTx 6 OcyKTx5.